Here is a 175-residue protein sequence, read N- to C-terminus: Transcription factor E (175 aa).

One can recognise an HTH TFE/IIEalpha-type domain in the interval 8–90 (NDPVIQKYLH…LWTFQYENIP (83 aa)).

This sequence belongs to the TFE family. As to quaternary structure, monomer. Interaction with RNA polymerase subunits RpoF and RpoE is necessary for Tfe stimulatory transcription activity. Able to interact with Tbp and RNA polymerase in the absence of DNA promoter. Interacts both with the preinitiation and elongation complexes.

Functionally, transcription factor that plays a role in the activation of archaeal genes transcribed by RNA polymerase. Facilitates transcription initiation by enhancing TATA-box recognition by TATA-box-binding protein (Tbp), and transcription factor B (Tfb) and RNA polymerase recruitment. Not absolutely required for transcription in vitro, but particularly important in cases where Tbp or Tfb function is not optimal. It dynamically alters the nucleic acid-binding properties of RNA polymerases by stabilizing the initiation complex and destabilizing elongation complexes. Seems to translocate with the RNA polymerase following initiation and acts by binding to the non template strand of the transcription bubble in elongation complexes. The sequence is that of Transcription factor E from Natronomonas pharaonis (strain ATCC 35678 / DSM 2160 / CIP 103997 / JCM 8858 / NBRC 14720 / NCIMB 2260 / Gabara) (Halobacterium pharaonis).